We begin with the raw amino-acid sequence, 342 residues long: dTDP-3,4-didehydro-2,6-dideoxy-alpha-D-glucose 3-reductase (342 aa).

Position 19 to 25 (19 to 25 (CADIALR)) interacts with NADP(+). R26 contacts substrate. NADP(+) is bound by residues 44 to 45 (SR), Y65, L81, and H86. The active-site Proton donor is K104. NADP(+)-binding residues include R172 and D184. Positions 243 and 263 each coordinate substrate.

It belongs to the Gfo/Idh/MocA family.

It carries out the reaction dTDP-4-dehydro-2,6-dideoxy-alpha-D-glucose + NADP(+) = dTDP-3,4-didehydro-2,6-dideoxy-alpha-D-glucose + NADPH + H(+). The protein operates within antibiotic biosynthesis; granaticin biosynthesis. Involved in the biosynthesis of the 2,6-deoxysugar, dTDP-L-rhodinose, attached to the benzoisochromane quinone chromophore to produce the aglycone antibiotics granaticin and granaticin B. Catalyzes the reduction of the C-3 keto moiety of dTDP-3,4-diketo-2,6-dideoxy-alpha-D-glucose to yield dTDP-4-keto-2,6-dideoxy-alpha-D-glucose. NADPH is the better reductant, however NADH can also be used. The chain is dTDP-3,4-didehydro-2,6-dideoxy-alpha-D-glucose 3-reductase from Streptomyces violaceoruber.